A 122-amino-acid chain; its full sequence is Large ribosomal subunit protein uL18 (122 aa).

Belongs to the universal ribosomal protein uL18 family. Part of the 50S ribosomal subunit; part of the 5S rRNA/L5/L18/L25 subcomplex. Contacts the 5S and 23S rRNAs.

Its function is as follows. This is one of the proteins that bind and probably mediate the attachment of the 5S RNA into the large ribosomal subunit, where it forms part of the central protuberance. The sequence is that of Large ribosomal subunit protein uL18 from Thermotoga petrophila (strain ATCC BAA-488 / DSM 13995 / JCM 10881 / RKU-1).